Here is a 300-residue protein sequence, read N- to C-terminus: Epimerase family protein SAV0769 (300 aa).

The protein belongs to the NAD(P)-dependent epimerase/dehydratase family. SDR39U1 subfamily.

The sequence is that of Epimerase family protein SAV0769 from Staphylococcus aureus (strain Mu50 / ATCC 700699).